We begin with the raw amino-acid sequence, 441 residues long: Ribosomal protein uS12 methylthiotransferase RimO (441 aa).

The region spanning 7–117 (PKVSFVSLGC…VLDAVHRALP (111 aa)) is the MTTase N-terminal domain. Residues Cys-16, Cys-52, Cys-81, Cys-148, Cys-152, and Cys-155 each coordinate [4Fe-4S] cluster. The region spanning 134-371 (LTPRHYAYLK…MARQQKISAR (238 aa)) is the Radical SAM core domain. Residues 374 to 440 (KRKVGTRQQV…AYDLHGSVAG (67 aa)) enclose the TRAM domain.

Belongs to the methylthiotransferase family. RimO subfamily. It depends on [4Fe-4S] cluster as a cofactor.

It is found in the cytoplasm. The catalysed reaction is L-aspartate(89)-[ribosomal protein uS12]-hydrogen + (sulfur carrier)-SH + AH2 + 2 S-adenosyl-L-methionine = 3-methylsulfanyl-L-aspartate(89)-[ribosomal protein uS12]-hydrogen + (sulfur carrier)-H + 5'-deoxyadenosine + L-methionine + A + S-adenosyl-L-homocysteine + 2 H(+). Catalyzes the methylthiolation of an aspartic acid residue of ribosomal protein uS12. In Rhodopseudomonas palustris (strain BisB18), this protein is Ribosomal protein uS12 methylthiotransferase RimO.